The primary structure comprises 213 residues: Imidazole glycerol phosphate synthase subunit HisH (213 aa).

The Glutamine amidotransferase type-1 domain occupies 4–211; sequence NLGLIDYGMG…LTWLRNGAEP (208 aa). The Nucleophile role is filled by C82. Residues H186 and E188 contribute to the active site.

As to quaternary structure, heterodimer of HisH and HisF.

It localises to the cytoplasm. It catalyses the reaction 5-[(5-phospho-1-deoxy-D-ribulos-1-ylimino)methylamino]-1-(5-phospho-beta-D-ribosyl)imidazole-4-carboxamide + L-glutamine = D-erythro-1-(imidazol-4-yl)glycerol 3-phosphate + 5-amino-1-(5-phospho-beta-D-ribosyl)imidazole-4-carboxamide + L-glutamate + H(+). The catalysed reaction is L-glutamine + H2O = L-glutamate + NH4(+). It participates in amino-acid biosynthesis; L-histidine biosynthesis; L-histidine from 5-phospho-alpha-D-ribose 1-diphosphate: step 5/9. Functionally, IGPS catalyzes the conversion of PRFAR and glutamine to IGP, AICAR and glutamate. The HisH subunit catalyzes the hydrolysis of glutamine to glutamate and ammonia as part of the synthesis of IGP and AICAR. The resulting ammonia molecule is channeled to the active site of HisF. This is Imidazole glycerol phosphate synthase subunit HisH from Synechococcus sp. (strain CC9605).